The chain runs to 451 residues: MATTAQYLPRGPGGGAGGTGPLMHPDAAAAAAAAAAAERLHAGAAYREVQKLMHHEWLGAGAGHPVGLAHPQWLPTGGGGGGDWAGGPHLEHGKAGGGSTGRADDGGGGGGFHARLVHQGAAHAGAAWAQGGTAHHLGPAMSPSPGAGGGHQPQPLGLYAQAAYPGGGGGGLAGMLAAGGGGAGPGLHHALHEDGHEAQLEPSPPPHLGAHGHAHGHAHAGGLHAAAAHLHPGAGGGGSSVGEHSDEDAPSSDDLEQFAKQFKQRRIKLGFTQADVGLALGTLYGNVFSQTTICRFEALQLSFKNMCKLKPLLNKWLEETDSSSGSPTNLDKIAAQGRKRKKRTSIEVGVKGALESHFLKCPKPSAHEITGLADSLQLEKEVVRVWFCNRRQKEKRMTPAAGAGHPPMDDVYAPGELGPGGGSASPPSAPPPPPPAALHHHHHHTLPGSVQ.

Disordered regions lie at residues 1–21 (MATTAQYLPRGPGGGAGGTGP), 69–114 (AHPQ…GFHA), 134–154 (AHHLGPAMSPSPGAGGGHQPQ), 186–253 (GLHH…PSSD), and 395–451 (KRMT…GSVQ). Composition is skewed to gly residues over residues 11 to 20 (GPGGGAGGTG), 76 to 85 (TGGGGGGDWA), and 95 to 112 (AGGGSTGRADDGGGGGGF). A compositionally biased stretch (low complexity) spans 134-145 (AHHLGPAMSPSP). Residues 190-199 (ALHEDGHEAQ) are compositionally biased toward basic and acidic residues. The segment covering 220 to 232 (AGGLHAAAAHLHP) has biased composition (low complexity). In terms of domain architecture, POU-specific spans 247-321 (EDAPSSDDLE…LLNKWLEETD (75 aa)). Residues 339-398 (KRKKRTSIEVGVKGALESHFLKCPKPSAHEITGLADSLQLEKEVVRVWFCNRRQKEKRMT) constitute a DNA-binding region (homeobox). A compositionally biased stretch (pro residues) spans 427–436 (PSAPPPPPPA).

The protein belongs to the POU transcription factor family. Class-3 subfamily. In terms of tissue distribution, neural tissues and testis.

Its subcellular location is the nucleus. Functionally, transcription factor that binds to the octamer motif (5'-ATTTGCAT-3'). Acts as a transcriptional activator when binding cooperatively with SOX4, SOX11, or SOX12 to gene promoters. Acts as a transcriptional repressor of myelin-specific genes. This is POU domain, class 3, transcription factor 1 (Pou3f1) from Rattus norvegicus (Rat).